Here is a 913-residue protein sequence, read N- to C-terminus: Protein SEY1 homolog (913 aa).

Topologically, residues 1–825 (MTDVNKTQII…ETGGHMSLKN (825 aa)) are cytoplasmic. One can recognise a GB1/RHD3-type G domain in the interval 33–288 (GFNYNVIAIL…IPADGFAQYC (256 aa)). 43–50 (GSQSSGKS) lines the GTP pocket. The chain crosses the membrane as a helical span at residues 826–846 (VPFAFWVILLILGWNEILMFT). Residues 847–849 (RLF) are Lumenal-facing. The chain crosses the membrane as a helical span at residues 850-870 (FRLNIILPMLIGFIIIVISCL). Residues 871–913 (YTGNAQILSYINKIIFIVIKNLYNFYKHLQTIGHQTTKPEKVE) are Cytoplasmic-facing.

The protein belongs to the TRAFAC class dynamin-like GTPase superfamily. GB1/RHD3 GTPase family. RHD3 subfamily.

Its subcellular location is the endoplasmic reticulum membrane. Functionally, probable GTP-binding protein involved in generating and maintaining the structure of the tubular endoplasmic reticulum network. This chain is Protein SEY1 homolog, found in Plasmodium berghei (strain Anka).